We begin with the raw amino-acid sequence, 897 residues long: Putative POM121-like protein 1-like (897 aa).

Basic and acidic residues predominate over residues 1–19 (MPEQDKDPRVQENPDDQRT). Disordered stretches follow at residues 1–177 (MPEQ…LPPP), 211–252 (IPDC…PKSQ), 266–302 (EVPSTAPVSGKKHRPPGPLFSSSDPLPATSYHSRDTA), 315–348 (ASRDAGMRRTRSAPAAATAAPPPSTLNNTSGSLL), 362–469 (ATAA…ASRP), 484–522 (DCRPSRPSHTLSSLATGASGGPPVSKAPTMDAQQDRPKS), 536–612 (AEVP…LPPS), 642–741 (AQRS…ASRP), 753–793 (AISD…DRPK), and 812–856 (STAP…APFT). Polar residues predominate over residues 54 to 65 (LHAQSSEIRYNH). Residues 66-76 (TSQTSWTSSST) show a composition bias toward low complexity. 3 stretches are compositionally biased toward polar residues: residues 77 to 89 (KRNAISSSYSSTG), 103 to 114 (SRCQLTLSYSKT), and 219 to 228 (PSHTLSSLAT). Composition is skewed to polar residues over residues 376 to 385 (NQRSQTSRTR), 417 to 430 (SHCQLAHSSSNTVS), 490 to 499 (PSHTLSSLAT), and 556 to 579 (FSSSDPLPATSSHSRDSAQVTSLI). Over residues 599–612 (TSAPAAAAAALPPS) the composition is skewed to low complexity. 4 stretches are compositionally biased toward polar residues: residues 650–676 (NQRSQTSRTRSCLKRNASSSSHSSTEG), 689–702 (SHCQLAHSSSNTVS), 762–771 (PSHTLSSLAT), and 828–849 (FSSSDPLPATSSHSGDSAQDTS). The chain crosses the membrane as a helical span at residues 877-897 (LGLFLLVFSFFFLLTWASFSF).

The protein belongs to the POM121 family.

Its subcellular location is the membrane. The chain is Putative POM121-like protein 1-like from Homo sapiens (Human).